The sequence spans 466 residues: ATP synthase subunit beta (466 aa).

Position 156-163 (156-163) interacts with ATP; it reads GGAGVGKT.

It belongs to the ATPase alpha/beta chains family. As to quaternary structure, F-type ATPases have 2 components, CF(1) - the catalytic core - and CF(0) - the membrane proton channel. CF(1) has five subunits: alpha(3), beta(3), gamma(1), delta(1), epsilon(1). CF(0) has three main subunits: a(1), b(2) and c(9-12). The alpha and beta chains form an alternating ring which encloses part of the gamma chain. CF(1) is attached to CF(0) by a central stalk formed by the gamma and epsilon chains, while a peripheral stalk is formed by the delta and b chains.

It localises to the cell membrane. It catalyses the reaction ATP + H2O + 4 H(+)(in) = ADP + phosphate + 5 H(+)(out). Produces ATP from ADP in the presence of a proton gradient across the membrane. The catalytic sites are hosted primarily by the beta subunits. The polypeptide is ATP synthase subunit beta (Buchnera aphidicola subsp. Schizaphis graminum (strain Sg)).